Here is a 392-residue protein sequence, read N- to C-terminus: NAD(P)H-quinone oxidoreductase subunit H, chloroplastic (392 aa).

It belongs to the complex I 49 kDa subunit family. NDH is composed of at least 16 different subunits, 5 of which are encoded in the nucleus.

The protein localises to the plastid. Its subcellular location is the chloroplast thylakoid membrane. The enzyme catalyses a plastoquinone + NADH + (n+1) H(+)(in) = a plastoquinol + NAD(+) + n H(+)(out). It carries out the reaction a plastoquinone + NADPH + (n+1) H(+)(in) = a plastoquinol + NADP(+) + n H(+)(out). Its function is as follows. NDH shuttles electrons from NAD(P)H:plastoquinone, via FMN and iron-sulfur (Fe-S) centers, to quinones in the photosynthetic chain and possibly in a chloroplast respiratory chain. The immediate electron acceptor for the enzyme in this species is believed to be plastoquinone. Couples the redox reaction to proton translocation, and thus conserves the redox energy in a proton gradient. This is NAD(P)H-quinone oxidoreductase subunit H, chloroplastic from Marchantia polymorpha (Common liverwort).